A 124-amino-acid chain; its full sequence is Aspartate 1-decarboxylase (124 aa).

Serine 21 functions as the Schiff-base intermediate with substrate; via pyruvic acid in the catalytic mechanism. The residue at position 21 (serine 21) is a Pyruvic acid (Ser). Substrate is bound at residue threonine 53. Tyrosine 54 acts as the Proton donor in catalysis. 69 to 71 (GAA) is a binding site for substrate.

Belongs to the PanD family. In terms of assembly, heterooctamer of four alpha and four beta subunits. Pyruvate is required as a cofactor. In terms of processing, is synthesized initially as an inactive proenzyme, which is activated by self-cleavage at a specific serine bond to produce a beta-subunit with a hydroxyl group at its C-terminus and an alpha-subunit with a pyruvoyl group at its N-terminus.

The protein localises to the cytoplasm. It carries out the reaction L-aspartate + H(+) = beta-alanine + CO2. It functions in the pathway cofactor biosynthesis; (R)-pantothenate biosynthesis; beta-alanine from L-aspartate: step 1/1. Its function is as follows. Catalyzes the pyruvoyl-dependent decarboxylation of aspartate to produce beta-alanine. The polypeptide is Aspartate 1-decarboxylase (Dehalococcoides mccartyi (strain ATCC BAA-2266 / KCTC 15142 / 195) (Dehalococcoides ethenogenes (strain 195))).